Reading from the N-terminus, the 339-residue chain is MAQLGAVVAVASSFFCASLFSAVHKIEEGHIGVYYRGGALLTSTSGPGFHLMLPFITSYKSVQTTLQTDEVKNVPCGTSGGVMIYFDRIEVVNFLVPHAVYDIVKNYTADYDKALIFNKIHHELNQFCSVHTLQEVYIELFDQIDENLKLALQQDLTSMAPGLVIQAVRVTKPNIPEAIRRNYELMESEKTKLLIAAQKQKVVEKEAETERKKALIEAEKVAQVAEITYGQKVMEKETEKKISEIEDAAFLAREKAKADAECYTALKIAEANKLKLTPEYLQLMKYKAIASNSKIYFGKDIPNMFMDSAGGLGKQSEGLSDKLGFGLEDEPLETATKDN.

Over 1–3 the chain is Cytoplasmic; it reads MAQ. A helical membrane pass occupies residues 4–24; it reads LGAVVAVASSFFCASLFSAVH. Residues 25-339 lie on the Extracellular side of the membrane; it reads KIEEGHIGVY…EPLETATKDN (315 aa). A glycan (N-linked (GlcNAc...) asparagine) is linked at Asn-106. Residues 177-309 form an interaction with ERLIN1 region; that stretch reads EAIRRNYELM…DIPNMFMDSA (133 aa). Lys-267 carries the post-translational modification N6-acetyllysine.

The protein belongs to the band 7/mec-2 family. As to quaternary structure, forms a heteromeric complex with ERLIN1. In complex with ERLIN1, interacts with RNF170. Interacts with activated ITPR1, independently of the degree of ITPR1 polyubiquitination. Interacts with SCAP, INSIG1, SREBF1 and SREBF2 under cholesterol sufficiency conditions; indicative for an association with the SCAP-SREBP-INSIG complex. Probably part of an AMFR/gp78 and INSIG1-containing ubiquitin ligase complex involved in ERAD of HMGCR. Interacts with TMUB1; TMUB1 bridges the association with AMFR. Interacts with SYVN1 and RNF139. Interacts with TMEM259. Interacts with TMEM41B. Post-translationally, deubiquitinated by USP25; leading to stabilization.

The protein localises to the endoplasmic reticulum membrane. Functionally, component of the ERLIN1/ERLIN2 complex which mediates the endoplasmic reticulum-associated degradation (ERAD) of inositol 1,4,5-trisphosphate receptors (IP3Rs) such as ITPR1. Promotes sterol-accelerated ERAD of HMGCR probably implicating an AMFR/gp78-containing ubiquitin ligase complex. Involved in regulation of cellular cholesterol homeostasis by regulation the SREBP signaling pathway. May promote ER retention of the SCAP-SREBF complex. This is Erlin-2 from Rattus norvegicus (Rat).